Consider the following 82-residue polypeptide: UPF0180 protein BAA_1480 (82 aa).

It belongs to the UPF0180 family.

This Bacillus anthracis (strain A0248) protein is UPF0180 protein BAA_1480.